A 118-amino-acid polypeptide reads, in one-letter code: Vesicle-associated membrane protein 1 (118 aa).

Over residues 1–15 (MSAPAQPPAEGTEGA) the composition is skewed to low complexity. The tract at residues 1–36 (MSAPAQPPAEGTEGAAPGGGPPGPPPNMTSNRRLQQ) is disordered. At 1–96 (MSAPAQPPAE…KRKYWWKNCK (96 aa)) the chain is on the cytoplasmic side. Residues 33 to 93 (RLQQTQAQVE…AKLKRKYWWK (61 aa)) enclose the v-SNARE coiled-coil homology domain. Residue serine 63 is modified to Phosphoserine. A helical; Anchor for type IV membrane protein membrane pass occupies residues 97-116 (MMIMLGAICAIIVVVIVIYF). The Vesicular portion of the chain corresponds to 117–118 (FT).

The protein belongs to the synaptobrevin family. In terms of assembly, interacts with VAPA and VAPB. (Microbial infection) Targeted and hydrolyzed by C.botulinum neurotoxin type X (BoNT/X) which hydrolyzes the 68-Arg-|-Ala-69 bond and probably inhibits neurotransmitter release. It remains unknown whether BoNT/X is ever produced, or what organisms it targets. Highly expressed in the zona incerta and rostral periolivary region of the brain. Other neuroanatomical regions show negligible expression. Expressed in the retina, expression observed in the outer segments of the photoreceptors, in the outer and inner plexiform layers, and in a subset of ganglion cells.

It localises to the cytoplasmic vesicle. It is found in the secretory vesicle. The protein localises to the synaptic vesicle membrane. Its subcellular location is the synapse. The protein resides in the synaptosome. It localises to the cytoplasmic vesicle membrane. In terms of biological role, involved in the targeting and/or fusion of transport vesicles to their target membrane. This is Vesicle-associated membrane protein 1 (Vamp1) from Mus musculus (Mouse).